A 1047-amino-acid chain; its full sequence is Atrial natriuretic peptide receptor 2 (1047 aa).

The signal sequence occupies residues Met-1 to Gly-16. Over Val-17–Ile-458 the chain is Extracellular. Asn-24 and Asn-35 each carry an N-linked (GlcNAc...) asparagine glycan. Cys-75 and Cys-101 are oxidised to a cystine. N-linked (GlcNAc...) asparagine glycans are attached at residues Asn-161, Asn-195, Asn-244, Asn-277, and Asn-349. Residues Val-459–Phe-478 traverse the membrane as a helical segment. Residues Arg-479–Leu-1047 lie on the Cytoplasmic side of the membrane. Ser-513 is modified (phosphoserine). Residues Ser-513–Ile-786 form the Protein kinase domain. Thr-516 carries the phosphothreonine modification. Residues Ser-518, Ser-522, Ser-523, and Ser-526 each carry the phosphoserine modification. A Phosphothreonine modification is found at Thr-529. The Guanylate cyclase domain occupies Thr-861–Glu-991.

Belongs to the adenylyl cyclase class-4/guanylyl cyclase family. In terms of processing, phosphorylated. Phosphorylation of the protein kinase-like domain is required for full activation by CNP. Post-translationally, glycosylated.

The protein localises to the cell membrane. The catalysed reaction is GTP = 3',5'-cyclic GMP + diphosphate. Receptor for the C-type natriuretic peptide NPPC/CNP hormone. Has guanylate cyclase activity upon binding of its ligand. May play a role in the regulation of skeletal growth. This chain is Atrial natriuretic peptide receptor 2 (Npr2), found in Rattus norvegicus (Rat).